A 96-amino-acid polypeptide reads, in one-letter code: Integration host factor subunit beta (96 aa).

Residues 59-78 (RVGRNPKTGETVSLPGKYVP) are disordered.

The protein belongs to the bacterial histone-like protein family. In terms of assembly, heterodimer of an alpha and a beta chain.

In terms of biological role, this protein is one of the two subunits of integration host factor, a specific DNA-binding protein that functions in genetic recombination as well as in transcriptional and translational control. This chain is Integration host factor subunit beta, found in Thioalkalivibrio sulfidiphilus (strain HL-EbGR7).